A 1178-amino-acid chain; its full sequence is Phytochrome B (1178 aa).

Residues 1-15 (MASGSRATPTRSPSS) are compositionally biased toward polar residues. A disordered region spans residues 1 to 58 (MASGSRATPTRSPSSARPEAPRHAHHHHHHHSQSSGGSTSRAGGGGGGGGGGGGTAAT). Residues 23 to 32 (HAHHHHHHHS) are compositionally biased toward basic residues. Gly residues predominate over residues 42–55 (AGGGGGGGGGGGGT). One can recognise a GAF domain in the interval 267 to 449 (DIKLLCDTVV…AFGLQLNMEL (183 aa)). C372 serves as a coordination point for phytochromobilin. 2 consecutive PAS domains span residues 668 to 739 (VARE…LRGE) and 802 to 873 (DYKA…MVVI). One can recognise a Histidine kinase domain in the interval 950–1170 (YICQEIKNPL…LIVLELPQPR (221 aa)).

The protein belongs to the phytochrome family. In terms of assembly, homodimer. In terms of processing, contains one covalently linked phytochromobilin chromophore.

In terms of biological role, regulatory photoreceptor which exists in two forms that are reversibly interconvertible by light: the Pr form that absorbs maximally in the red region of the spectrum and the Pfr form that absorbs maximally in the far-red region. Photoconversion of Pr to Pfr induces an array of morphogenic responses, whereas reconversion of Pfr to Pr cancels the induction of those responses. Pfr controls the expression of a number of nuclear genes including those encoding the small subunit of ribulose-bisphosphate carboxylase, chlorophyll A/B binding protein, protochlorophyllide reductase, rRNA, etc. It also controls the expression of its own gene(s) in a negative feedback fashion. This chain is Phytochrome B (PHYB), found in Sorghum bicolor (Sorghum).